A 732-amino-acid chain; its full sequence is Elongation factor 2 (732 aa).

The tr-type G domain occupies 19-228 (ELIRNIGIVA…TKITFKDIVE (210 aa)). GTP contacts are provided by residues 28-35 (AHIDHGKT), 94-98 (DTPGH), and 148-151 (NKID). At His598 the chain carries Diphthamide.

The protein belongs to the TRAFAC class translation factor GTPase superfamily. Classic translation factor GTPase family. EF-G/EF-2 subfamily.

It localises to the cytoplasm. Its function is as follows. Catalyzes the GTP-dependent ribosomal translocation step during translation elongation. During this step, the ribosome changes from the pre-translocational (PRE) to the post-translocational (POST) state as the newly formed A-site-bound peptidyl-tRNA and P-site-bound deacylated tRNA move to the P and E sites, respectively. Catalyzes the coordinated movement of the two tRNA molecules, the mRNA and conformational changes in the ribosome. In Thermoplasma acidophilum (strain ATCC 25905 / DSM 1728 / JCM 9062 / NBRC 15155 / AMRC-C165), this protein is Elongation factor 2 (fusA).